We begin with the raw amino-acid sequence, 322 residues long: 4-hydroxy-3-methylbut-2-enyl diphosphate reductase (322 aa).

[4Fe-4S] cluster is bound at residue C15. (2E)-4-hydroxy-3-methylbut-2-enyl diphosphate is bound by residues H44 and H77. 2 residues coordinate dimethylallyl diphosphate: H44 and H77. Isopentenyl diphosphate is bound by residues H44 and H77. Position 99 (C99) interacts with [4Fe-4S] cluster. Position 127 (H127) interacts with (2E)-4-hydroxy-3-methylbut-2-enyl diphosphate. Residue H127 participates in dimethylallyl diphosphate binding. Isopentenyl diphosphate is bound at residue H127. E129 functions as the Proton donor in the catalytic mechanism. T168 lines the (2E)-4-hydroxy-3-methylbut-2-enyl diphosphate pocket. Residue C198 participates in [4Fe-4S] cluster binding. Positions 226, 227, 228, and 270 each coordinate (2E)-4-hydroxy-3-methylbut-2-enyl diphosphate. Residues S226, S227, N228, and S270 each coordinate dimethylallyl diphosphate. Isopentenyl diphosphate contacts are provided by S226, S227, N228, and S270.

It belongs to the IspH family. The cofactor is [4Fe-4S] cluster.

It carries out the reaction isopentenyl diphosphate + 2 oxidized [2Fe-2S]-[ferredoxin] + H2O = (2E)-4-hydroxy-3-methylbut-2-enyl diphosphate + 2 reduced [2Fe-2S]-[ferredoxin] + 2 H(+). It catalyses the reaction dimethylallyl diphosphate + 2 oxidized [2Fe-2S]-[ferredoxin] + H2O = (2E)-4-hydroxy-3-methylbut-2-enyl diphosphate + 2 reduced [2Fe-2S]-[ferredoxin] + 2 H(+). It participates in isoprenoid biosynthesis; dimethylallyl diphosphate biosynthesis; dimethylallyl diphosphate from (2E)-4-hydroxy-3-methylbutenyl diphosphate: step 1/1. It functions in the pathway isoprenoid biosynthesis; isopentenyl diphosphate biosynthesis via DXP pathway; isopentenyl diphosphate from 1-deoxy-D-xylulose 5-phosphate: step 6/6. In terms of biological role, catalyzes the conversion of 1-hydroxy-2-methyl-2-(E)-butenyl 4-diphosphate (HMBPP) into a mixture of isopentenyl diphosphate (IPP) and dimethylallyl diphosphate (DMAPP). Acts in the terminal step of the DOXP/MEP pathway for isoprenoid precursor biosynthesis. In Neisseria meningitidis serogroup A / serotype 4A (strain DSM 15465 / Z2491), this protein is 4-hydroxy-3-methylbut-2-enyl diphosphate reductase.